The following is a 571-amino-acid chain: Hemagglutinin-neuraminidase (571 aa).

The Intravirion segment spans residues M1–R26. A helical transmembrane segment spans residues I27–S47. Residues M48 to V571 are Virion surface-facing. Residue N119 is glycosylated (N-linked (GlcNAc...) asparagine; by host). Residues G124–Y152 are important for interaction with fusion/F protein. Disulfide bonds link C172–C196, C186–C247, and C238–C251. The tract at residues N234 to S239 is involved in neuraminidase activity. Residues N341 and N433 are each glycosylated (N-linked (GlcNAc...) asparagine; by host). Cystine bridges form between C344-C461 and C455-C465. N-linked (GlcNAc...) asparagine; by host glycosylation is found at N481, N508, and N538. C531 and C542 are oxidised to a cystine.

This sequence belongs to the paramyxoviruses hemagglutinin-neuraminidase family. As to quaternary structure, homotetramer; composed of disulfide-linked homodimers. Interacts with F protein trimer. Interacts with host CG-1B; this interaction inhibits viral adsorption and replication rather than internalization.

The protein resides in the virion membrane. The protein localises to the host cell membrane. The catalysed reaction is Hydrolysis of alpha-(2-&gt;3)-, alpha-(2-&gt;6)-, alpha-(2-&gt;8)- glycosidic linkages of terminal sialic acid residues in oligosaccharides, glycoproteins, glycolipids, colominic acid and synthetic substrates.. Functionally, mediates the viral entry into the host cell together with fusion/F protein. Attaches the virus to sialic acid-containing cell receptors and thereby initiates infection. Binding of HN protein to the receptor induces a conformational change that allows the F protein to trigger virion/cell membranes fusion. Its function is as follows. Neuraminidase activity ensures the efficient spread of the virus by dissociating the mature virions from the neuraminic acid containing glycoproteins. This chain is Hemagglutinin-neuraminidase (HN), found in Gallus gallus (Chicken).